The following is a 188-amino-acid chain: Inner membrane-spanning protein YciB (188 aa).

Helical transmembrane passes span 22–42 (IYIA…VTWM), 50–70 (MTLV…VFHN), 72–92 (LFIK…LLVS), 121–141 (FAWA…AFWL), and 149–169 (FKVF…GVYI).

This sequence belongs to the YciB family.

Its subcellular location is the cell inner membrane. Plays a role in cell envelope biogenesis, maintenance of cell envelope integrity and membrane homeostasis. The polypeptide is Inner membrane-spanning protein YciB (Pectobacterium carotovorum subsp. carotovorum (strain PC1)).